A 564-amino-acid chain; its full sequence is Dihydroxy-acid dehydratase (564 aa).

D78 contacts Mg(2+). [2Fe-2S] cluster is bound at residue C119. Mg(2+) contacts are provided by D120 and K121. K121 carries the post-translational modification N6-carboxylysine. C192 provides a ligand contact to [2Fe-2S] cluster. Mg(2+) is bound at residue E451. S477 serves as the catalytic Proton acceptor.

The protein belongs to the IlvD/Edd family. Homodimer. The cofactor is [2Fe-2S] cluster. Mg(2+) is required as a cofactor.

It carries out the reaction (2R)-2,3-dihydroxy-3-methylbutanoate = 3-methyl-2-oxobutanoate + H2O. It catalyses the reaction (2R,3R)-2,3-dihydroxy-3-methylpentanoate = (S)-3-methyl-2-oxopentanoate + H2O. Its pathway is amino-acid biosynthesis; L-isoleucine biosynthesis; L-isoleucine from 2-oxobutanoate: step 3/4. It participates in amino-acid biosynthesis; L-valine biosynthesis; L-valine from pyruvate: step 3/4. Functions in the biosynthesis of branched-chain amino acids. Catalyzes the dehydration of (2R,3R)-2,3-dihydroxy-3-methylpentanoate (2,3-dihydroxy-3-methylvalerate) into 2-oxo-3-methylpentanoate (2-oxo-3-methylvalerate) and of (2R)-2,3-dihydroxy-3-methylbutanoate (2,3-dihydroxyisovalerate) into 2-oxo-3-methylbutanoate (2-oxoisovalerate), the penultimate precursor to L-isoleucine and L-valine, respectively. This Nitratiruptor sp. (strain SB155-2) protein is Dihydroxy-acid dehydratase.